The primary structure comprises 198 residues: Beta-crystallin A1-2 (198 aa).

The tract at residues 1 to 13 (MAQINPLPVPLGP) is N-terminal arm. Beta/gamma crystallin 'Greek key' domains are found at residues 14–53 (WKITVYDQENFQGKRMEFTSSCANIMECGFDNIRSLKVEC) and 54–100 (GAWI…RPIC). The connecting peptide stretch occupies residues 101-106 (SANHIE). Beta/gamma crystallin 'Greek key' domains follow at residues 107-148 (SKLV…KVQC) and 149-197 (GAWV…RRIQ).

The protein belongs to the beta/gamma-crystallin family. In terms of assembly, homo/heterodimer, or complexes of higher-order. The structure of beta-crystallin oligomers seems to be stabilized through interactions between the N-terminal arms. Post-translationally, the N-terminus is blocked.

Crystallins are the dominant structural components of the vertebrate eye lens. This Aquarana catesbeiana (American bullfrog) protein is Beta-crystallin A1-2.